A 171-amino-acid polypeptide reads, in one-letter code: Adenine phosphoribosyltransferase (171 aa).

The protein belongs to the purine/pyrimidine phosphoribosyltransferase family. In terms of assembly, homodimer.

The protein resides in the cytoplasm. The catalysed reaction is AMP + diphosphate = 5-phospho-alpha-D-ribose 1-diphosphate + adenine. It functions in the pathway purine metabolism; AMP biosynthesis via salvage pathway; AMP from adenine: step 1/1. In terms of biological role, catalyzes a salvage reaction resulting in the formation of AMP, that is energically less costly than de novo synthesis. The sequence is that of Adenine phosphoribosyltransferase from Geotalea uraniireducens (strain Rf4) (Geobacter uraniireducens).